Reading from the N-terminus, the 68-residue chain is Protein SlyX homolog (68 aa).

It belongs to the SlyX family.

The chain is Protein SlyX homolog from Brucella anthropi (strain ATCC 49188 / DSM 6882 / CCUG 24695 / JCM 21032 / LMG 3331 / NBRC 15819 / NCTC 12168 / Alc 37) (Ochrobactrum anthropi).